The chain runs to 603 residues: Probable L-gulonolactone oxidase 6 (603 aa).

The first 35 residues, 1-35, serve as a signal peptide directing secretion; sequence MAFTSSPSYGSLNAAFWRTIFVVHCISTLVFTTIS. Residues 64 to 246 enclose the FAD-binding PCMH-type domain; that stretch reads STCRAANVAY…SQVTLKLQPM (183 aa).

Belongs to the oxygen-dependent FAD-linked oxidoreductase family. It depends on FAD as a cofactor.

It catalyses the reaction L-gulono-1,4-lactone + O2 = L-ascorbate + H2O2 + H(+). It participates in cofactor biosynthesis; L-ascorbate biosynthesis. Its function is as follows. May be involved in the biosynthesis of ascorbic acid. This chain is Probable L-gulonolactone oxidase 6, found in Arabidopsis thaliana (Mouse-ear cress).